The sequence spans 514 residues: Cytochrome P450 94A1 (514 aa).

Residues 7–29 (EVLLPYLLPLLLLILPTTIFFLT) traverse the membrane as a helical segment. Cys458 serves as a coordination point for heme.

This sequence belongs to the cytochrome P450 family. The cofactor is heme.

It localises to the endoplasmic reticulum membrane. In terms of biological role, catalyzes the omega-hydroxylation of various fatty acids (FA) from 10 to 18 carbon atoms. The substrate specificity is higher for laurate &gt; palmitate &gt; myristate &gt; linolenate &gt; linoleate &gt; oleate &gt; caprate. May play a minor role in cutin synthesis and could be involved in plant defense. This Vicia sativa (Spring vetch) protein is Cytochrome P450 94A1 (CYP94A1).